The following is a 158-amino-acid chain: MNKPKNSPVRKIIAENRKARFNFEILDTLEAGLVLTGTEVKSLRANQSNIAESYASFENGEFWLINSYIPEYTQGNRFNHEPRRLRKLLISKREMSRLFNSVSRDGMTVVPLKLYFNDRGRAKLELALARGKKTHDKRETEKKRDWNREKARLMRDKG.

The tract at residues 132–158 is disordered; it reads KKTHDKRETEKKRDWNREKARLMRDKG. Over residues 136 to 158 the composition is skewed to basic and acidic residues; that stretch reads DKRETEKKRDWNREKARLMRDKG.

It belongs to the SmpB family.

The protein resides in the cytoplasm. Required for rescue of stalled ribosomes mediated by trans-translation. Binds to transfer-messenger RNA (tmRNA), required for stable association of tmRNA with ribosomes. tmRNA and SmpB together mimic tRNA shape, replacing the anticodon stem-loop with SmpB. tmRNA is encoded by the ssrA gene; the 2 termini fold to resemble tRNA(Ala) and it encodes a 'tag peptide', a short internal open reading frame. During trans-translation Ala-aminoacylated tmRNA acts like a tRNA, entering the A-site of stalled ribosomes, displacing the stalled mRNA. The ribosome then switches to translate the ORF on the tmRNA; the nascent peptide is terminated with the 'tag peptide' encoded by the tmRNA and targeted for degradation. The ribosome is freed to recommence translation, which seems to be the essential function of trans-translation. In Brucella anthropi (strain ATCC 49188 / DSM 6882 / CCUG 24695 / JCM 21032 / LMG 3331 / NBRC 15819 / NCTC 12168 / Alc 37) (Ochrobactrum anthropi), this protein is SsrA-binding protein.